The primary structure comprises 160 residues: 6,7-dimethyl-8-ribityllumazine synthase (160 aa).

5-amino-6-(D-ribitylamino)uracil is bound by residues Trp27, 59-61 (AIE), and 81-83 (VVI). 86–87 (QT) contacts (2S)-2-hydroxy-3-oxobutyl phosphate. Catalysis depends on His89, which acts as the Proton donor. Residue Asn114 participates in 5-amino-6-(D-ribitylamino)uracil binding. Arg128 lines the (2S)-2-hydroxy-3-oxobutyl phosphate pocket.

It belongs to the DMRL synthase family. In terms of assembly, homopentamer.

The enzyme catalyses (2S)-2-hydroxy-3-oxobutyl phosphate + 5-amino-6-(D-ribitylamino)uracil = 6,7-dimethyl-8-(1-D-ribityl)lumazine + phosphate + 2 H2O + H(+). Its pathway is cofactor biosynthesis; riboflavin biosynthesis; riboflavin from 2-hydroxy-3-oxobutyl phosphate and 5-amino-6-(D-ribitylamino)uracil: step 1/2. Its function is as follows. Catalyzes the formation of 6,7-dimethyl-8-ribityllumazine by condensation of 5-amino-6-(D-ribitylamino)uracil with 3,4-dihydroxy-2-butanone 4-phosphate. This is the penultimate step in the biosynthesis of riboflavin. The chain is 6,7-dimethyl-8-ribityllumazine synthase from Mycolicibacterium paratuberculosis (strain ATCC BAA-968 / K-10) (Mycobacterium paratuberculosis).